The following is a 113-amino-acid chain: Na(+)/H(+) antiporter subunit C1 (113 aa).

A run of 3 helical transmembrane segments spans residues 1–21, 28–48, and 72–92; these read MEII…YLVL, IVMG…TMGG, and LILT…VLAF.

The protein belongs to the CPA3 antiporters (TC 2.A.63) subunit C family. May form a heterooligomeric complex that consists of seven subunits: mnhA1, mnhB1, mnhC1, mnhD1, mnhE1, mnhF1 and mnhG1.

The protein localises to the cell membrane. Its function is as follows. Mnh complex is a Na(+)/H(+) antiporter involved in Na(+) excretion. The polypeptide is Na(+)/H(+) antiporter subunit C1 (mnhC1) (Staphylococcus haemolyticus (strain JCSC1435)).